Reading from the N-terminus, the 239-residue chain is Peptidyl-tRNA hydrolase (239 aa).

Tyr-14 is a binding site for tRNA. His-19 serves as the catalytic Proton acceptor. Residues Phe-64, Asn-66, and Asn-112 each coordinate tRNA. The tract at residues 188–239 (APPRSSTSKPKAQDNREDAAQAAEERSETRTPPEARPEDTRSALQKLADKFR) is disordered. Basic and acidic residues predominate over residues 198–239 (KAQDNREDAAQAAEERSETRTPPEARPEDTRSALQKLADKFR).

It belongs to the PTH family. As to quaternary structure, monomer.

The protein resides in the cytoplasm. It catalyses the reaction an N-acyl-L-alpha-aminoacyl-tRNA + H2O = an N-acyl-L-amino acid + a tRNA + H(+). Its function is as follows. Hydrolyzes ribosome-free peptidyl-tRNAs (with 1 or more amino acids incorporated), which drop off the ribosome during protein synthesis, or as a result of ribosome stalling. In terms of biological role, catalyzes the release of premature peptidyl moieties from peptidyl-tRNA molecules trapped in stalled 50S ribosomal subunits, and thus maintains levels of free tRNAs and 50S ribosomes. The protein is Peptidyl-tRNA hydrolase of Jannaschia sp. (strain CCS1).